The primary structure comprises 203 residues: Ribosomal RNA large subunit methyltransferase E (203 aa).

S-adenosyl-L-methionine contacts are provided by Gly-51, Trp-53, Asp-69, Asp-85, and Asp-108. The active-site Proton acceptor is Lys-148.

This sequence belongs to the class I-like SAM-binding methyltransferase superfamily. RNA methyltransferase RlmE family.

It is found in the cytoplasm. It catalyses the reaction uridine(2552) in 23S rRNA + S-adenosyl-L-methionine = 2'-O-methyluridine(2552) in 23S rRNA + S-adenosyl-L-homocysteine + H(+). Specifically methylates the uridine in position 2552 of 23S rRNA at the 2'-O position of the ribose in the fully assembled 50S ribosomal subunit. The sequence is that of Ribosomal RNA large subunit methyltransferase E from Methanosphaerula palustris (strain ATCC BAA-1556 / DSM 19958 / E1-9c).